A 358-amino-acid polypeptide reads, in one-letter code: 3-isopropylmalate dehydrogenase (358 aa).

77-90 (GPKWDNLPIDQRPE) contributes to the NAD(+) binding site. Substrate contacts are provided by arginine 98, arginine 108, arginine 137, and aspartate 221. Residues aspartate 221, aspartate 245, and aspartate 249 each coordinate Mg(2+). 279–291 (GSAPDIAHLNIAN) contributes to the NAD(+) binding site.

This sequence belongs to the isocitrate and isopropylmalate dehydrogenases family. LeuB type 1 subfamily. Homodimer. It depends on Mg(2+) as a cofactor. The cofactor is Mn(2+).

Its subcellular location is the cytoplasm. It catalyses the reaction (2R,3S)-3-isopropylmalate + NAD(+) = 4-methyl-2-oxopentanoate + CO2 + NADH. It functions in the pathway amino-acid biosynthesis; L-leucine biosynthesis; L-leucine from 3-methyl-2-oxobutanoate: step 3/4. Its function is as follows. Catalyzes the oxidation of 3-carboxy-2-hydroxy-4-methylpentanoate (3-isopropylmalate) to 3-carboxy-4-methyl-2-oxopentanoate. The product decarboxylates to 4-methyl-2 oxopentanoate. In Campylobacter jejuni (strain RM1221), this protein is 3-isopropylmalate dehydrogenase.